The primary structure comprises 880 residues: Translation initiation factor IF-2 (880 aa).

The span at glutamate 143–isoleucine 228 shows a compositional bias: basic and acidic residues. Positions glutamate 143–asparagine 289 are disordered. A compositionally biased stretch (basic residues) spans glycine 249–glycine 262. The tr-type G domain maps to serine 380–lysine 549. The G1 stretch occupies residues glycine 389 to threonine 396. Glycine 389–threonine 396 contributes to the GTP binding site. The tract at residues glycine 414–histidine 418 is G2. The tract at residues aspartate 435–glycine 438 is G3. GTP-binding positions include aspartate 435–histidine 439 and asparagine 489–aspartate 492. The tract at residues asparagine 489–aspartate 492 is G4. Residues serine 525 to lysine 527 form a G5 region.

This sequence belongs to the TRAFAC class translation factor GTPase superfamily. Classic translation factor GTPase family. IF-2 subfamily.

It localises to the cytoplasm. One of the essential components for the initiation of protein synthesis. Protects formylmethionyl-tRNA from spontaneous hydrolysis and promotes its binding to the 30S ribosomal subunits. Also involved in the hydrolysis of GTP during the formation of the 70S ribosomal complex. In Shewanella putrefaciens (strain CN-32 / ATCC BAA-453), this protein is Translation initiation factor IF-2.